Here is a 400-residue protein sequence, read N- to C-terminus: Mannitol-1-phosphate 5-dehydrogenase (400 aa).

An NAD(+)-binding site is contributed by 12–23 (AVHFGAGNIGRG). The active site involves K221.

Belongs to the mannitol dehydrogenase family. Monomer.

The enzyme catalyses D-mannitol 1-phosphate + NAD(+) = beta-D-fructose 6-phosphate + NADH + H(+). In terms of biological role, catalyzes the NAD(H)-dependent interconversion of D-fructose 6-phosphate and D-mannitol 1-phosphate in the mannitol metabolic pathway. This chain is Mannitol-1-phosphate 5-dehydrogenase, found in Pyricularia oryzae (strain Y34) (Rice blast fungus).